Consider the following 171-residue polypeptide: Adenine phosphoribosyltransferase (171 aa).

It belongs to the purine/pyrimidine phosphoribosyltransferase family. In terms of assembly, homodimer.

The protein resides in the cytoplasm. The catalysed reaction is AMP + diphosphate = 5-phospho-alpha-D-ribose 1-diphosphate + adenine. The protein operates within purine metabolism; AMP biosynthesis via salvage pathway; AMP from adenine: step 1/1. Its function is as follows. Catalyzes a salvage reaction resulting in the formation of AMP, that is energically less costly than de novo synthesis. The protein is Adenine phosphoribosyltransferase of Christiangramia forsetii (strain DSM 17595 / CGMCC 1.15422 / KT0803) (Gramella forsetii).